Consider the following 75-residue polypeptide: Small ribosomal subunit protein bS18 (75 aa).

Belongs to the bacterial ribosomal protein bS18 family. In terms of assembly, part of the 30S ribosomal subunit. Forms a tight heterodimer with protein bS6.

Its function is as follows. Binds as a heterodimer with protein bS6 to the central domain of the 16S rRNA, where it helps stabilize the platform of the 30S subunit. The chain is Small ribosomal subunit protein bS18 from Acinetobacter baumannii (strain AB307-0294).